The following is a 119-amino-acid chain: UPF0102 protein Nmul_A0195 (119 aa).

This sequence belongs to the UPF0102 family.

The polypeptide is UPF0102 protein Nmul_A0195 (Nitrosospira multiformis (strain ATCC 25196 / NCIMB 11849 / C 71)).